The sequence spans 414 residues: Cytosolic-abundant heat soluble protein 89226 (414 aa).

Basic and acidic residues-rich tracts occupy residues 27–45 (IGEDRGKEDPGMNFQDKRP) and 69–84 (AGQRLREHLSESERLR). A disordered region spans residues 27–155 (IGEDRGKEDP…SNPGMNNGMT (129 aa)). 2 stretches are compositionally biased toward low complexity: residues 86 to 101 (SRSSTSSKSSSFVEPS) and 120 to 134 (SSNRQNSSSNVSSSD). A compositionally biased stretch (polar residues) spans 142 to 155 (ASRNSNPGMNNGMT). CAHS motif regions lie at residues 305 to 323 (YRNAVEADAELIRQTLERQ) and 342 to 360 (QQQEIRLEAEYAMRALEQE). Residues 341-376 (RQQQEIRLEAEYAMRALEQERVNARAALDQAMASTN) are a coiled coil. Residues 388-405 (THSQGRVTTTSESRTSQA) are compositionally biased toward polar residues. Residues 388-414 (THSQGRVTTTSESRTSQARGPATAAVI) are disordered.

This sequence belongs to the Cytosolic-abundant heat soluble protein (CAHS) family.

It localises to the cytoplasm. CAHS proteins are cytosolic heat soluble proteins that seem to contribute to the anhydrobiosis in tardigrades, but their specific mechanisms are yet to be identified. It is possible that protection during anhydrobiosis might occur via the stabilization of vitrifying small molecules such as sugars, but not via the direct glass transition of CAHS proteins themselves. The chain is Cytosolic-abundant heat soluble protein 89226 from Hypsibius exemplaris (Freshwater tardigrade).